The primary structure comprises 462 residues: Sensor histidine kinase ZraS (462 aa).

The Cytoplasmic portion of the chain corresponds to 1–14 (MNVMRLSKDSVAVG). Residues 15–35 (LSWLLTGLILLLVCLFSALIV) traverse the membrane as a helical segment. The Periplasmic portion of the chain corresponds to 36-197 (RDYGRENEAA…ADHARGLRNM (162 aa)). The helical transmembrane segment at 198 to 218 (VIMLCAAGVVMAATVLAQFWF) threads the bilayer. Topologically, residues 219–462 (RRYQRSRKQL…VNGQQKDEQG (244 aa)) are cytoplasmic. The Histidine kinase domain maps to 247–455 (GVAHEIRNPL…LFTFYLPVNG (209 aa)). H250 bears the Phosphohistidine; by autocatalysis mark.

Autophosphorylated.

It is found in the cell inner membrane. The enzyme catalyses ATP + protein L-histidine = ADP + protein N-phospho-L-histidine.. Activity of the ZraS/ZraR two-component system is repressed by the zinc-bound form of ZraP, which probably interacts with the periplasmic region of ZraS. Part of the Zra signaling pathway, an envelope stress response (ESR) system composed of the periplasmic accessory protein ZraP, the histidine kinase ZraS and the transcriptional regulator ZraR. The ZraPSR system contributes to antibiotic resistance and is important for membrane integrity in the presence of membrane-targeting biocides. ZraS is a member of the two-component regulatory system ZraS/ZraR. Functions as a membrane-associated sensor kinase that phosphorylates ZraR in response to high concentrations of Zn(2+) or Pb(2+) in the medium. This Klebsiella oxytoca protein is Sensor histidine kinase ZraS (zraS).